A 345-amino-acid polypeptide reads, in one-letter code: MATAMDTGAGASAPAVPQGDRTSADYYFDSYSHFGIHEEMLKDSVRTRTYMNAILNNAYLFKDKIVLDIGCGTGILSLFSAKAGAKHVYGIECSTIAEQATQIVKDNKFDDRVTIIKGKVEEVTLPVDKVDIIISEWMGYFLFYESMLDTVIYARDKWLVPGGIIMPDKATLSLCAIEDGEYKHDKIEFWDNVYGFNMSCIKQLAIAEPLVDIVEPDQIASTIQTVVSVDISTMKKEDATFTVPYELTMTRNDYVHALVGFFDVSFTRGHKPLSFTTSPRARATHWKQTVFYLEDTLMASKDETISGKLECKPNAKNPRDLDISIAYEFEGERGQVKNTQQYRMR.

The SAM-dependent MTase PRMT-type domain occupies 24-345 (ADYYFDSYSH…VKNTQQYRMR (322 aa)). S-adenosyl-L-methionine-binding residues include histidine 37, arginine 46, glycine 70, glutamate 92, and glutamate 121. Catalysis depends on residues glutamate 136 and glutamate 145.

Belongs to the class I-like SAM-binding methyltransferase superfamily. Protein arginine N-methyltransferase family. In terms of processing, phosphorylated during flagellum resorption.

The protein localises to the nucleus. Its subcellular location is the cell projection. The protein resides in the cilium. It localises to the flagellum. It carries out the reaction L-arginyl-[protein] + S-adenosyl-L-methionine = N(omega)-methyl-L-arginyl-[protein] + S-adenosyl-L-homocysteine + H(+). The enzyme catalyses L-arginyl-[protein] + 2 S-adenosyl-L-methionine = N(omega),N(omega)-dimethyl-L-arginyl-[protein] + 2 S-adenosyl-L-homocysteine + 2 H(+). In terms of biological role, arginine methyltransferase that methylates (mono and asymmetric dimethylation) the guanidino nitrogens of arginyl residues present in target proteins. Mediates asymmetric dimethylation of components of the axoneme during flagellum resorption, such as CCDC40/FAP172, CCDC65/FAP250, RSP1, RSP2, RPS5, RSP6, and tektin. In Chlamydomonas reinhardtii (Chlamydomonas smithii), this protein is Protein arginine N-methyltransferase 1 (PRMT1).